We begin with the raw amino-acid sequence, 336 residues long: Holliday junction branch migration complex subunit RuvB (336 aa).

Residues 1 to 182 (MAKRMITTEL…FGVVHRLEFY (182 aa)) form a large ATPase domain (RuvB-L) region. ATP is bound by residues L21, R22, G63, K66, T67, T68, 129–131 (EDY), R172, Y182, and R219. A Mg(2+)-binding site is contributed by T67. A small ATPAse domain (RuvB-S) region spans residues 183–253 (TTEELKEIIT…VARFALDILE (71 aa)). The segment at 256–336 (KLGLDHIDRQ…GLPYENKELS (81 aa)) is head domain (RuvB-H). DNA contacts are provided by R311 and R316.

This sequence belongs to the RuvB family. Homohexamer. Forms an RuvA(8)-RuvB(12)-Holliday junction (HJ) complex. HJ DNA is sandwiched between 2 RuvA tetramers; dsDNA enters through RuvA and exits via RuvB. An RuvB hexamer assembles on each DNA strand where it exits the tetramer. Each RuvB hexamer is contacted by two RuvA subunits (via domain III) on 2 adjacent RuvB subunits; this complex drives branch migration. In the full resolvosome a probable DNA-RuvA(4)-RuvB(12)-RuvC(2) complex forms which resolves the HJ.

The protein localises to the cytoplasm. It catalyses the reaction ATP + H2O = ADP + phosphate + H(+). Functionally, the RuvA-RuvB-RuvC complex processes Holliday junction (HJ) DNA during genetic recombination and DNA repair, while the RuvA-RuvB complex plays an important role in the rescue of blocked DNA replication forks via replication fork reversal (RFR). RuvA specifically binds to HJ cruciform DNA, conferring on it an open structure. The RuvB hexamer acts as an ATP-dependent pump, pulling dsDNA into and through the RuvAB complex. RuvB forms 2 homohexamers on either side of HJ DNA bound by 1 or 2 RuvA tetramers; 4 subunits per hexamer contact DNA at a time. Coordinated motions by a converter formed by DNA-disengaged RuvB subunits stimulates ATP hydrolysis and nucleotide exchange. Immobilization of the converter enables RuvB to convert the ATP-contained energy into a lever motion, pulling 2 nucleotides of DNA out of the RuvA tetramer per ATP hydrolyzed, thus driving DNA branch migration. The RuvB motors rotate together with the DNA substrate, which together with the progressing nucleotide cycle form the mechanistic basis for DNA recombination by continuous HJ branch migration. Branch migration allows RuvC to scan DNA until it finds its consensus sequence, where it cleaves and resolves cruciform DNA. The sequence is that of Holliday junction branch migration complex subunit RuvB from Lachnoclostridium phytofermentans (strain ATCC 700394 / DSM 18823 / ISDg) (Clostridium phytofermentans).